The primary structure comprises 297 residues: NAD(P)-dependent methylenetetrahydromethanopterin dehydrogenase (297 aa).

To M.extorquens MtdA. Homohexamer.

The protein localises to the cytoplasm. It catalyses the reaction 5,10-methylenetetrahydromethanopterin + NAD(+) = 5,10-methenyl-5,6,7,8-tetrahydromethanopterin + NADH. It carries out the reaction 5,10-methylenetetrahydromethanopterin + NADP(+) = 5,10-methenyl-5,6,7,8-tetrahydromethanopterin + NADPH. It functions in the pathway one-carbon metabolism; formaldehyde degradation; formate from formaldehyde (H(4)MPT route): step 2/5. Catalyzes the dehydrogenation of methylene-H(4)MPT. The polypeptide is NAD(P)-dependent methylenetetrahydromethanopterin dehydrogenase (mtdB) (Methylorubrum extorquens (strain ATCC 14718 / DSM 1338 / JCM 2805 / NCIMB 9133 / AM1) (Methylobacterium extorquens)).